A 303-amino-acid chain; its full sequence is tRNA pseudouridine synthase B (303 aa).

Asp-53 (nucleophile) is an active-site residue.

The protein belongs to the pseudouridine synthase TruB family. Type 1 subfamily.

It carries out the reaction uridine(55) in tRNA = pseudouridine(55) in tRNA. Responsible for synthesis of pseudouridine from uracil-55 in the psi GC loop of transfer RNAs. This Zymomonas mobilis subsp. mobilis (strain ATCC 31821 / ZM4 / CP4) protein is tRNA pseudouridine synthase B.